A 339-amino-acid polypeptide reads, in one-letter code: 2-deoxy-scyllo-inosamine dehydrogenase (339 aa).

Zn(2+)-binding residues include C37, H59, C88, C91, C94, C102, and E143.

Belongs to the zinc-containing alcohol dehydrogenase family. DOIA dehydrogenase subfamily. The cofactor is Zn(2+).

It carries out the reaction 2-deoxy-scyllo-inosamine + NADP(+) = 3-amino-2,3-dideoxy-scyllo-inosose + NADPH + H(+). The catalysed reaction is 2-deoxy-scyllo-inosamine + NAD(+) = 3-amino-2,3-dideoxy-scyllo-inosose + NADH + H(+). Its pathway is metabolic intermediate biosynthesis; 2-deoxystreptamine biosynthesis; 2-deoxystreptamine from D-glucose 6-phosphate: step 3/4. It functions in the pathway antibiotic biosynthesis; tobramycin biosynthesis. Its function is as follows. Catalyzes the oxidation of 2-deoxy-scyllo-inosamine (DOIA) with NAD(+) or NADP(+), forming 3-amino-2,3-dideoxy-scyllo-inosose (amino-DOI). The sequence is that of 2-deoxy-scyllo-inosamine dehydrogenase (tobE) from Streptoalloteichus tenebrarius (strain ATCC 17920 / DSM 40477 / JCM 4838 / CBS 697.72 / NBRC 16177 / NCIMB 11028 / NRRL B-12390 / A12253. 1 / ISP 5477) (Streptomyces tenebrarius).